The following is a 356-amino-acid chain: Histidinol-phosphate aminotransferase 2 (356 aa).

Lys-217 bears the N6-(pyridoxal phosphate)lysine mark.

It belongs to the class-II pyridoxal-phosphate-dependent aminotransferase family. Histidinol-phosphate aminotransferase subfamily. As to quaternary structure, homodimer. It depends on pyridoxal 5'-phosphate as a cofactor.

It catalyses the reaction L-histidinol phosphate + 2-oxoglutarate = 3-(imidazol-4-yl)-2-oxopropyl phosphate + L-glutamate. It functions in the pathway amino-acid biosynthesis; L-histidine biosynthesis; L-histidine from 5-phospho-alpha-D-ribose 1-diphosphate: step 7/9. The polypeptide is Histidinol-phosphate aminotransferase 2 (Burkholderia pseudomallei (strain 1710b)).